A 94-amino-acid chain; its full sequence is Co-chaperonin GroES (94 aa).

It belongs to the GroES chaperonin family. In terms of assembly, heptamer of 7 subunits arranged in a ring. Interacts with the chaperonin GroEL.

The protein localises to the cytoplasm. Its function is as follows. Together with the chaperonin GroEL, plays an essential role in assisting protein folding. The GroEL-GroES system forms a nano-cage that allows encapsulation of the non-native substrate proteins and provides a physical environment optimized to promote and accelerate protein folding. GroES binds to the apical surface of the GroEL ring, thereby capping the opening of the GroEL channel. This Streptococcus equinus (Streptococcus bovis) protein is Co-chaperonin GroES.